A 554-amino-acid chain; its full sequence is Valerianol synthase TPS1A (554 aa).

Positions 307 and 311 each coordinate Mg(2+). A DDXXD motif motif is present at residues 326-330 (VQRWD). Residues aspartate 452, serine 456, and glutamate 460 each coordinate Mg(2+).

This sequence belongs to the terpene synthase family. Mg(2+) serves as cofactor. In terms of tissue distribution, expressed in flowers.

It carries out the reaction (2E,6E)-farnesyl diphosphate + H2O = valerianol + diphosphate. It participates in secondary metabolite biosynthesis; terpenoid biosynthesis. In terms of biological role, terpene synthase that catalyzes the biosynthesis of the terpene valerianol, which is a volatile compound of floral scent. The sequence is that of Valerianol synthase TPS1A from Camellia hiemalis (Camellia).